The following is a 263-amino-acid chain: Splicing regulator sde2 (263 aa).

A propeptide spans 1–84 (UBL); it reads MECKTVFLNG…LTLCTRVLGG (84 aa). Disordered regions lie at residues 95–118, 137–158, and 194–263; these read AGGR…LDGN, PAET…LAAD, and STSA…LYGL. Residues 102–117 show a composition bias toward basic and acidic residues; sequence KRNEQENQDSCRDLDG. Composition is skewed to low complexity over residues 194–209 and 219–230; these read STSA…GATT and NNNSSINSWSRR.

The protein belongs to the SDE2 family. As to quaternary structure, interacts with cay1/cactin. Interacts with prp19. Interacts with cwf12. Interacts with cdc5. Post-translationally, the N-terminal UBL (ubiquitin-like) propeptide is cleaved at Gly-84 by the deubiquitinating enzymes ubp5 and ubp15; the resulting mature sde2 associates with spliceosomes. Polyubiquitinated; ubiquitination is partially dependent on ubr11.

It localises to the cytoplasm. The protein localises to the nucleus. In terms of biological role, plays a role in pre-mRNA splicing by facilitating excision of introns featuring relatively long (&gt;21 nucleotides) spacing between the branchpoint and 3'-splice site (ss). Recruits cactin to the spliceosome which may enable folding of RNA between the branchpoint and 3'-ss, to guide the splice site towards the spliceosome's catalytic center. Required for proper chromatin organization by assisting splicing of components involved in genomic stability and telomere organization. This chain is Splicing regulator sde2, found in Schizosaccharomyces pombe (strain 972 / ATCC 24843) (Fission yeast).